The primary structure comprises 186 residues: Peptidyl-tRNA hydrolase (186 aa).

Residue Tyr-14 coordinates tRNA. The active-site Proton acceptor is His-19. TRNA contacts are provided by Tyr-64, Asn-66, and Asn-112.

This sequence belongs to the PTH family. As to quaternary structure, monomer.

The protein resides in the cytoplasm. The catalysed reaction is an N-acyl-L-alpha-aminoacyl-tRNA + H2O = an N-acyl-L-amino acid + a tRNA + H(+). Functionally, hydrolyzes ribosome-free peptidyl-tRNAs (with 1 or more amino acids incorporated), which drop off the ribosome during protein synthesis, or as a result of ribosome stalling. Catalyzes the release of premature peptidyl moieties from peptidyl-tRNA molecules trapped in stalled 50S ribosomal subunits, and thus maintains levels of free tRNAs and 50S ribosomes. This Bacillus cereus (strain ATCC 10987 / NRS 248) protein is Peptidyl-tRNA hydrolase.